The sequence spans 201 residues: Small ribosomal subunit protein uS4 (201 aa).

The S4 RNA-binding domain maps to cysteine 93–asparagine 155.

Belongs to the universal ribosomal protein uS4 family. Part of the 30S ribosomal subunit. Contacts protein S5. The interaction surface between S4 and S5 is involved in control of translational fidelity.

Functionally, one of the primary rRNA binding proteins, it binds directly to 16S rRNA where it nucleates assembly of the body of the 30S subunit. Its function is as follows. With S5 and S12 plays an important role in translational accuracy. This Elusimicrobium minutum (strain Pei191) protein is Small ribosomal subunit protein uS4.